The primary structure comprises 177 residues: CCHC-type zinc finger nucleic acid binding protein (177 aa).

Position 2 is an N-acetylserine (S2). Residues 4 to 21 (NECFKCGRSGHWARECPT) form a CCHC-type 1 zinc finger. K8 carries the N6-acetyllysine modification. Omega-N-methylarginine; by PRMT1 occurs at positions 25 and 27. Residues 25–38 (RGRGMRSRGRGGFT) form an RNA-binding Arg/Gly-rich region (RGG-box) region. R32 and R34 each carry omega-N-methylarginine. A Phosphoserine modification is found at S49. CCHC-type zinc fingers lie at residues 52 to 69 (DICYRCGESGHLAKDCDL), 72 to 89 (DACYNCGRGGHIAKDCKE), 96 to 113 (QCCYNCGKPGHLARDCDH), 117 to 134 (QKCYSCGEFGHIQKDCTK), 135 to 152 (VKCYRCGETGHVAINCSK), and 156 to 173 (VNCYRCGESGHLARECTI). Omega-N-methylarginine occurs at positions 73, 79, and 80.

As to quaternary structure, associates with the 40S ribosomal subunit, the 80S ribosome and with polysomes. Post-translationally, arginine methylation by PRMT1 in the Arg/Gly-rich region impedes RNA binding. Expressed in the liver, kidney, spleen, testis, lung, muscle and adrenal glands.

It localises to the nucleus. The protein resides in the cytoplasm. Its subcellular location is the endoplasmic reticulum. Functionally, single-stranded DNA-binding protein that preferentially binds to the sterol regulatory element (SRE) sequence 5'-GTGCGGTG-3', and thereby mediates transcriptional repression. Has a role as transactivator of the Myc promoter. Binds single-stranded RNA in a sequence-specific manner. Its function is as follows. Binds G-rich elements in target mRNA coding sequences. Prevents G-quadruplex structure formation in vitro, suggesting a role in supporting translation by resolving stable structures on mRNAs. Binds to RNA. This is CCHC-type zinc finger nucleic acid binding protein from Homo sapiens (Human).